A 476-amino-acid polypeptide reads, in one-letter code: Probable rhodanese domain-containing dual specificity protein phosphatase (476 aa).

The Rhodanese domain occupies 32 to 190 (IGSSKIIIDL…FQKDYSFMCN (159 aa)). Residues 208-350 (YPSEIIKDFL…LKDYQQHLTL (143 aa)) enclose the Tyrosine-protein phosphatase domain. Cys294 acts as the Phosphocysteine intermediate in catalysis. The segment covering 425–436 (KTTTSSTTINNK) has biased composition (low complexity). Residues 425-476 (KTTTSSTTINNKGQQQDKAQEEKDSIFSYADKQEKMTHPTLHSPIELPQSSL) form a disordered region. The span at 442–461 (KAQEEKDSIFSYADKQEKMT) shows a compositional bias: basic and acidic residues.

Belongs to the protein-tyrosine phosphatase family. Non-receptor class dual specificity subfamily.

It carries out the reaction O-phospho-L-tyrosyl-[protein] + H2O = L-tyrosyl-[protein] + phosphate. The enzyme catalyses O-phospho-L-seryl-[protein] + H2O = L-seryl-[protein] + phosphate. The catalysed reaction is O-phospho-L-threonyl-[protein] + H2O = L-threonyl-[protein] + phosphate. In terms of biological role, has a dual specificity toward Ser/Thr and Tyr-containing proteins. This chain is Probable rhodanese domain-containing dual specificity protein phosphatase, found in Dictyostelium discoideum (Social amoeba).